A 300-amino-acid polypeptide reads, in one-letter code: N-acetylmuramic acid 6-phosphate etherase 1 (300 aa).

In terms of domain architecture, SIS spans 57–220; sequence IATAFAQGGR…TTGAMIKSGK (164 aa). E85 serves as the catalytic Proton donor. E116 is an active-site residue.

The protein belongs to the GCKR-like family. MurNAc-6-P etherase subfamily. In terms of assembly, homodimer.

It catalyses the reaction N-acetyl-D-muramate 6-phosphate + H2O = N-acetyl-D-glucosamine 6-phosphate + (R)-lactate. It functions in the pathway amino-sugar metabolism; 1,6-anhydro-N-acetylmuramate degradation. The protein operates within amino-sugar metabolism; N-acetylmuramate degradation. It participates in cell wall biogenesis; peptidoglycan recycling. Functionally, specifically catalyzes the cleavage of the D-lactyl ether substituent of MurNAc 6-phosphate, producing GlcNAc 6-phosphate and D-lactate. Together with AnmK, is also required for the utilization of anhydro-N-acetylmuramic acid (anhMurNAc) either imported from the medium or derived from its own cell wall murein, and thus plays a role in cell wall recycling. The sequence is that of N-acetylmuramic acid 6-phosphate etherase 1 from Vibrio cholerae serotype O1 (strain ATCC 39315 / El Tor Inaba N16961).